Here is a 273-residue protein sequence, read N- to C-terminus: Phosphate import ATP-binding protein PstB (273 aa).

The region spanning 19–258 (LSLQNVTISY…FNDTDKIFNA (240 aa)) is the ABC transporter domain. 51-58 (GPSGCGKS) contacts ATP.

This sequence belongs to the ABC transporter superfamily. Phosphate importer (TC 3.A.1.7) family. In terms of assembly, the complex is composed of two ATP-binding proteins (PstB), two transmembrane proteins (PstC and PstA) and a solute-binding protein (PstS).

The protein resides in the cell inner membrane. It carries out the reaction phosphate(out) + ATP + H2O = ADP + 2 phosphate(in) + H(+). In terms of biological role, part of the ABC transporter complex PstSACB involved in phosphate import. Responsible for energy coupling to the transport system. In Synechococcus sp. (strain CC9605), this protein is Phosphate import ATP-binding protein PstB.